Reading from the N-terminus, the 404-residue chain is Probable tRNA sulfurtransferase (404 aa).

Positions 60-165 constitute a THUMP domain; sequence RSVIEALKPV…DEAAYLSHED (106 aa). ATP-binding positions include 183 to 184, 208 to 209, arginine 265, glycine 287, and glutamine 296; these read ML and HF.

This sequence belongs to the ThiI family.

It is found in the cytoplasm. It carries out the reaction [ThiI sulfur-carrier protein]-S-sulfanyl-L-cysteine + a uridine in tRNA + 2 reduced [2Fe-2S]-[ferredoxin] + ATP + H(+) = [ThiI sulfur-carrier protein]-L-cysteine + a 4-thiouridine in tRNA + 2 oxidized [2Fe-2S]-[ferredoxin] + AMP + diphosphate. It catalyses the reaction [ThiS sulfur-carrier protein]-C-terminal Gly-Gly-AMP + S-sulfanyl-L-cysteinyl-[cysteine desulfurase] + AH2 = [ThiS sulfur-carrier protein]-C-terminal-Gly-aminoethanethioate + L-cysteinyl-[cysteine desulfurase] + A + AMP + 2 H(+). Its pathway is cofactor biosynthesis; thiamine diphosphate biosynthesis. Catalyzes the ATP-dependent transfer of a sulfur to tRNA to produce 4-thiouridine in position 8 of tRNAs, which functions as a near-UV photosensor. Also catalyzes the transfer of sulfur to the sulfur carrier protein ThiS, forming ThiS-thiocarboxylate. This is a step in the synthesis of thiazole, in the thiamine biosynthesis pathway. The sulfur is donated as persulfide by IscS. In Streptococcus equi subsp. zooepidemicus (strain H70), this protein is Probable tRNA sulfurtransferase.